We begin with the raw amino-acid sequence, 589 residues long: ATP-dependent lipid A-core flippase (589 aa).

Transmembrane regions (helical) follow at residues 37-57 (ALAI…PALL), 72-92 (LWLV…SGFL), 151-171 (IMKL…LVYL), 173-193 (WKLM…IQVL), 260-280 (SAIT…IALL), and 286-306 (TTTV…IAPV). In terms of domain architecture, ABC transmembrane type-1 spans 37–318 (ALAIGATIVA…LSDAATPVTR (282 aa)). One can recognise an ABC transporter domain in the interval 350–584 (IEFADVSVIY…NGAYAHLYRL (235 aa)). 384–391 (GASGSGKT) provides a ligand contact to ATP.

The protein belongs to the ABC transporter superfamily. Lipid exporter (TC 3.A.1.106) family. Homodimer.

It is found in the cell inner membrane. It carries out the reaction ATP + H2O + lipid A-core oligosaccharideSide 1 = ADP + phosphate + lipid A-core oligosaccharideSide 2.. Its function is as follows. Involved in lipopolysaccharide (LPS) biosynthesis. Translocates lipid A-core from the inner to the outer leaflet of the inner membrane. Transmembrane domains (TMD) form a pore in the inner membrane and the ATP-binding domain (NBD) is responsible for energy generation. The sequence is that of ATP-dependent lipid A-core flippase from Polaromonas sp. (strain JS666 / ATCC BAA-500).